The chain runs to 329 residues: Malate dehydrogenase (329 aa).

Residue 12–18 (GAAGQIG) coordinates NAD(+). Positions 95 and 101 each coordinate substrate. NAD(+) contacts are provided by residues N108, Q115, and 132 to 134 (VGN). Residues N134 and R165 each coordinate substrate. The active-site Proton acceptor is H190.

Belongs to the LDH/MDH superfamily. MDH type 2 family.

The enzyme catalyses (S)-malate + NAD(+) = oxaloacetate + NADH + H(+). Functionally, catalyzes the reversible oxidation of malate to oxaloacetate. The chain is Malate dehydrogenase from Bordetella bronchiseptica (strain ATCC BAA-588 / NCTC 13252 / RB50) (Alcaligenes bronchisepticus).